A 412-amino-acid chain; its full sequence is Clamp protein VP6 (412 aa).

The protein belongs to the reoviridae clamp protein family. In terms of assembly, interacts with capsid proteins VP3, VP5 and VP7.

It is found in the virion. Functionally, located at the interface of the incomplete T=13 outer capsid and the pseudo T=2 inner capsid, 120 VP6 subunits clamp and stabilizes the inner capsid shell. The sequence is that of Clamp protein VP6 (S8) from Aquareovirus C (isolate Golden shiner/USA/GSRV/1977) (AQRV-C).